We begin with the raw amino-acid sequence, 416 residues long: Glyceraldehyde-3-phosphate dehydrogenase, chloroplastic (416 aa).

The N-terminal 78 residues, methionine 1–serine 78, are a transit peptide targeting the chloroplast. NADP(+)-binding positions include arginine 90–isoleucine 91, aspartate 114, and arginine 158. D-glyceraldehyde 3-phosphate-binding positions include serine 232–threonine 234, threonine 263, arginine 278, threonine 291–glycine 292, and arginine 314. Cysteine 233 serves as the catalytic Nucleophile. Position 396 (asparagine 396) interacts with NADP(+).

It belongs to the glyceraldehyde-3-phosphate dehydrogenase family. Homotetramer.

The protein localises to the plastid. It is found in the chloroplast. The catalysed reaction is D-glyceraldehyde 3-phosphate + phosphate + NADP(+) = (2R)-3-phospho-glyceroyl phosphate + NADPH + H(+). It participates in carbohydrate biosynthesis; Calvin cycle. The sequence is that of Glyceraldehyde-3-phosphate dehydrogenase, chloroplastic (GAPA) from Gracilaria gracilis (Red alga).